Consider the following 150-residue polypeptide: Actin-related protein 2/3 complex subunit 5-C (150 aa).

Positions 21–45 (NKFVDEEEAGEGQQGPDEGEVDSAI) are disordered.

The protein belongs to the ARPC5 family. Component of the Arp2/3 complex composed of actr2/arp2, actr3/arp3, arpc1 (arpc1a or arpc1b), arpc2, arpc3, arpc4 and arpc5.

It localises to the cytoplasm. The protein resides in the cytoskeleton. Its subcellular location is the cell projection. The protein localises to the nucleus. Its function is as follows. Component of the Arp2/3 complex, a multiprotein complex that mediates actin polymerization upon stimulation by nucleation-promoting factor (NPF). The Arp2/3 complex mediates the formation of branched actin networks in the cytoplasm, providing the force for cell motility. In addition to its role in the cytoplasmic cytoskeleton, the Arp2/3 complex also promotes actin polymerization in the nucleus, thereby regulating gene transcription and repair of damaged DNA. The Arp2/3 complex promotes homologous recombination (HR) repair in response to DNA damage by promoting nuclear actin polymerization, leading to drive motility of double-strand breaks (DSBs). This Xenopus laevis (African clawed frog) protein is Actin-related protein 2/3 complex subunit 5-C (arpc5-c).